Reading from the N-terminus, the 621-residue chain is Na(+)/H(+) antiporter NhaA (621 aa).

The tract at residues 1-430 (MPASSFGESS…LGWLIFKVAA (430 aa)) is na(+)/H(+) antiporter NhaA. Helical transmembrane passes span 27-47 (GAAV…NSPL), 72-92 (LHHW…GLEV), 109-129 (LALI…VLIV), 139-159 (GWGA…AIVG), 168-188 (VFLL…IGIV), 192-212 (EIRI…WLLG), 223-243 (VLIV…ASLA), 300-320 (FLRL…NAGV), 339-359 (VIAG…LVAV), 375-395 (VFGG…IIGL), and 409-429 (VGVL…FKVA). Residues 431-578 (QRWGEKTADL…VERDLASAVA (148 aa)) form the Thioredoxin domain.

This sequence in the N-terminal section; belongs to the NhaA Na(+)/H(+) (TC 2.A.33) antiporter family.

The protein localises to the cell inner membrane. It catalyses the reaction Na(+)(in) + 2 H(+)(out) = Na(+)(out) + 2 H(+)(in). Na(+)/H(+) antiporter that extrudes sodium in exchange for external protons. The polypeptide is Na(+)/H(+) antiporter NhaA (Herminiimonas arsenicoxydans).